Consider the following 226-residue polypeptide: Deoxyribose-phosphate aldolase (226 aa).

The Proton donor/acceptor role is filled by Asp-93. The Schiff-base intermediate with acetaldehyde role is filled by Lys-159. Residue Lys-189 is the Proton donor/acceptor of the active site.

This sequence belongs to the DeoC/FbaB aldolase family. DeoC type 1 subfamily.

It is found in the cytoplasm. The catalysed reaction is 2-deoxy-D-ribose 5-phosphate = D-glyceraldehyde 3-phosphate + acetaldehyde. It functions in the pathway carbohydrate degradation; 2-deoxy-D-ribose 1-phosphate degradation; D-glyceraldehyde 3-phosphate and acetaldehyde from 2-deoxy-alpha-D-ribose 1-phosphate: step 2/2. In terms of biological role, catalyzes a reversible aldol reaction between acetaldehyde and D-glyceraldehyde 3-phosphate to generate 2-deoxy-D-ribose 5-phosphate. The polypeptide is Deoxyribose-phosphate aldolase (Mycobacterium marinum (strain ATCC BAA-535 / M)).